The chain runs to 291 residues: Acetyl-coenzyme A carboxylase carboxyl transferase subunit beta (291 aa).

Residues 34–291 (MWTKCSNCNS…LILHGVNKYE (258 aa)) enclose the CoA carboxyltransferase N-terminal domain. Zn(2+) is bound by residues Cys38, Cys41, Cys57, and Cys60. The C4-type zinc finger occupies 38–60 (CSNCNSMIYYEDLENNKYVCTKC).

It belongs to the AccD/PCCB family. Acetyl-CoA carboxylase is a heterohexamer composed of biotin carboxyl carrier protein (AccB), biotin carboxylase (AccC) and two subunits each of ACCase subunit alpha (AccA) and ACCase subunit beta (AccD). Zn(2+) serves as cofactor.

The protein localises to the cytoplasm. It carries out the reaction N(6)-carboxybiotinyl-L-lysyl-[protein] + acetyl-CoA = N(6)-biotinyl-L-lysyl-[protein] + malonyl-CoA. It participates in lipid metabolism; malonyl-CoA biosynthesis; malonyl-CoA from acetyl-CoA: step 1/1. Its function is as follows. Component of the acetyl coenzyme A carboxylase (ACC) complex. Biotin carboxylase (BC) catalyzes the carboxylation of biotin on its carrier protein (BCCP) and then the CO(2) group is transferred by the transcarboxylase to acetyl-CoA to form malonyl-CoA. This is Acetyl-coenzyme A carboxylase carboxyl transferase subunit beta from Clostridium botulinum (strain Alaska E43 / Type E3).